The primary structure comprises 953 residues: Glutamate receptor 3.5 (953 aa).

The N-terminal stretch at 1-29 (MGFFVMIRDVSMGFMLLCISALWVLPIQG) is a signal peptide. At 30–606 (AGRESFSRNS…SPWSFLKPFT (577 aa)) the chain is on the extracellular side. N-linked (GlcNAc...) asparagine glycans are attached at residues N38, N95, N223, N371, N397, N436, N454, and N569. The helical transmembrane segment at 607 to 627 (IEMWAVTGALFLFVGAVIWIL) threads the bilayer. The Cytoplasmic portion of the chain corresponds to 628–636 (EHRFNEEFR). A helical membrane pass occupies residues 637 to 657 (GPPRRQIITVFWFSFSTMFFS). At 658-668 (HRENTVSTLGR) the chain is on the cytoplasmic side. A helical transmembrane segment spans residues 669–689 (FVLLVWLFVVLIINSSYTASL). Residues 690–850 (TSILTVQQLT…TENYQISVQS (161 aa)) lie on the Extracellular side of the membrane. The helical transmembrane segment at 851–871 (FWGLFLICGVVWFIALTLFCW) threads the bilayer. At 872–953 (KVFWQYQRLR…SQSKDHETPQ (82 aa)) the chain is on the cytoplasmic side. A disordered region spans residues 928–953 (EKSSKKLKDGQSSAENSQSKDHETPQ).

Belongs to the glutamate-gated ion channel (TC 1.A.10.1) family. May form heteromers. Expressed predominantly in roots. Also detected in shoots.

The protein resides in the membrane. Glutamate-gated receptor that probably acts as a non-selective cation channel. May be involved in light-signal transduction and calcium homeostasis via the regulation of calcium influx into cells. This is Glutamate receptor 3.5 (GLR3.5) from Arabidopsis thaliana (Mouse-ear cress).